Here is a 310-residue protein sequence, read N- to C-terminus: MSEDAVKNAILIAGPTASGKSALAIRMAKATGGFIVNTDSMQVYGVLDLLTARPSRANLAEAEHFLYGHVPPSSTYSTGKWFEDVEALLGRCELQGRVPIFVGGTGLYFRALLGGLSQTPEVSAQVRDHWRGRMEAEGAKALHAVLCVRDPAIAAALQPSDSQRIVRALEVLESTGKSLLEWQKVKGRALVDDQSAQKIVLRPDRAWLGERIARRFSAMWAEGAIDEVRALLALDLDPALPAMKAIGVREVSAFLAETMSREEAIERSVIATRQYAKRQSTWFRNQLGEDWRVYASGEEVFQGGSFRDPQ.

Gly14 to Ser21 lines the ATP pocket. Position 16–21 (Thr16–Ser21) interacts with substrate. Interaction with substrate tRNA regions lie at residues Asp39–Gln42 and Gln163–Arg167.

Belongs to the IPP transferase family. As to quaternary structure, monomer. It depends on Mg(2+) as a cofactor.

The enzyme catalyses adenosine(37) in tRNA + dimethylallyl diphosphate = N(6)-dimethylallyladenosine(37) in tRNA + diphosphate. Catalyzes the transfer of a dimethylallyl group onto the adenine at position 37 in tRNAs that read codons beginning with uridine, leading to the formation of N6-(dimethylallyl)adenosine (i(6)A). The polypeptide is tRNA dimethylallyltransferase (Brucella melitensis biotype 2 (strain ATCC 23457)).